The sequence spans 360 residues: GTP 3',8-cyclase (360 aa).

The disordered stretch occupies residues 1-31; sequence MTVTALGVPTVRGRSEGSAVASDAPGDGPLL. The 219-residue stretch at 33-251 folds into the Radical SAM core domain; the sequence is RFGRSATDLR…LQPHFRLRPD (219 aa). Residue R42 participates in GTP binding. [4Fe-4S] cluster contacts are provided by C49 and C53. Y55 contacts S-adenosyl-L-methionine. Residue C56 coordinates [4Fe-4S] cluster. R93 contributes to the GTP binding site. G97 is an S-adenosyl-L-methionine binding site. GTP is bound at residue T124. S148 is an S-adenosyl-L-methionine binding site. K185 is a GTP binding site. M219 provides a ligand contact to S-adenosyl-L-methionine. [4Fe-4S] cluster contacts are provided by C287 and C290. 292-294 serves as a coordination point for GTP; that stretch reads RTR. [4Fe-4S] cluster is bound at residue C304.

Belongs to the radical SAM superfamily. MoaA family. As to quaternary structure, monomer and homodimer. It depends on [4Fe-4S] cluster as a cofactor.

It catalyses the reaction GTP + AH2 + S-adenosyl-L-methionine = (8S)-3',8-cyclo-7,8-dihydroguanosine 5'-triphosphate + 5'-deoxyadenosine + L-methionine + A + H(+). Its pathway is cofactor biosynthesis; molybdopterin biosynthesis. In terms of biological role, catalyzes the cyclization of GTP to (8S)-3',8-cyclo-7,8-dihydroguanosine 5'-triphosphate. The polypeptide is GTP 3',8-cyclase (Mycobacterium ulcerans (strain Agy99)).